A 65-amino-acid chain; its full sequence is MTTPPERPETSVDRKLLEILVCPVTKGPLEFDAARQELISRGAKLAYPIRDGIPIMLPEEARKLG.

Belongs to the UPF0434 family.

The protein is UPF0434 protein RPB_0294 of Rhodopseudomonas palustris (strain HaA2).